The primary structure comprises 513 residues: ATP synthase subunit alpha 1 (513 aa).

Residue 169–176 (GDRQTGKT) coordinates ATP.

Belongs to the ATPase alpha/beta chains family. In terms of assembly, F-type ATPases have 2 components, CF(1) - the catalytic core - and CF(0) - the membrane proton channel. CF(1) has five subunits: alpha(3), beta(3), gamma(1), delta(1), epsilon(1). CF(0) has three main subunits: a(1), b(2) and c(9-12). The alpha and beta chains form an alternating ring which encloses part of the gamma chain. CF(1) is attached to CF(0) by a central stalk formed by the gamma and epsilon chains, while a peripheral stalk is formed by the delta and b chains.

Its subcellular location is the cell inner membrane. It carries out the reaction ATP + H2O + 4 H(+)(in) = ADP + phosphate + 5 H(+)(out). Produces ATP from ADP in the presence of a proton gradient across the membrane. The alpha chain is a regulatory subunit. This Methylococcus capsulatus (strain ATCC 33009 / NCIMB 11132 / Bath) protein is ATP synthase subunit alpha 1.